Reading from the N-terminus, the 121-residue chain is Ribosome-binding factor A (121 aa).

It belongs to the RbfA family. In terms of assembly, monomer. Binds 30S ribosomal subunits, but not 50S ribosomal subunits or 70S ribosomes.

Its subcellular location is the cytoplasm. Functionally, one of several proteins that assist in the late maturation steps of the functional core of the 30S ribosomal subunit. Associates with free 30S ribosomal subunits (but not with 30S subunits that are part of 70S ribosomes or polysomes). Required for efficient processing of 16S rRNA. May interact with the 5'-terminal helix region of 16S rRNA. The polypeptide is Ribosome-binding factor A (Lactobacillus helveticus (strain DPC 4571)).